Reading from the N-terminus, the 208-residue chain is Large ribosomal subunit protein uL4 (208 aa).

Residues 54–78 form a disordered region; that stretch reads RAEVSHTTKKPWNQKGTGRARAGMS.

Belongs to the universal ribosomal protein uL4 family. Part of the 50S ribosomal subunit.

One of the primary rRNA binding proteins, this protein initially binds near the 5'-end of the 23S rRNA. It is important during the early stages of 50S assembly. It makes multiple contacts with different domains of the 23S rRNA in the assembled 50S subunit and ribosome. In terms of biological role, forms part of the polypeptide exit tunnel. The sequence is that of Large ribosomal subunit protein uL4 from Methylobacillus flagellatus (strain ATCC 51484 / DSM 6875 / VKM B-1610 / KT).